A 391-amino-acid chain; its full sequence is Transforming growth factor beta-1 proprotein (391 aa).

Residues 1–18 (MDPSPLLALLLLLGAARA) form the signal peptide. Residues 19–63 (LSTCQRLDLEAAKKKRIEAVRGQILSKLRLTAPPPASETPPRPLP) form a straightjacket domain region. Residues 64 to 270 (DDVRALYNST…ALPAERANEL (207 aa)) form an arm domain region. Residues N71, N126, and N171 are each glycosylated (N-linked (GlcNAc...) asparagine). The bowtie tail stretch occupies residues 221–249 (EMGPGHADEMRISIEGFEQQRGDMQSIAK). The short motif at 241–243 (RGD) is the Cell attachment site element. Cystine bridges form between C284-C295, C294-C357, C323-C388, and C327-C390.

The protein belongs to the TGF-beta family. Latency-associated peptide: Homodimer; disulfide-linked. Latency-associated peptide: Interacts with Transforming growth factor beta-1 (TGF-beta-1) chain; interaction is non-covalent and maintains (TGF-beta-1) in a latent state; each Latency-associated peptide (LAP) monomer interacts with TGF-beta-1 in the other monomer. Transforming growth factor beta-1: Homodimer; disulfide-linked. Transforming growth factor beta-1: Interacts with TGF-beta receptors (TGFBR1 and TGFBR2), leading to signal transduction. Post-translationally, transforming growth factor beta-1 proprotein: The precursor proprotein is cleaved in the Golgi apparatus to form Transforming growth factor beta-1 (TGF-beta-1) and Latency-associated peptide (LAP) chains, which remain non-covalently linked, rendering TGF-beta-1 inactive.

Its subcellular location is the secreted. It is found in the extracellular space. The protein localises to the extracellular matrix. Its function is as follows. Transforming growth factor beta-1 proprotein: Precursor of the Latency-associated peptide (LAP) and Transforming growth factor beta-1 (TGF-beta-1) chains, which constitute the regulatory and active subunit of TGF-beta-1, respectively. Required to maintain the Transforming growth factor beta-1 (TGF-beta-1) chain in a latent state during storage in extracellular matrix. Associates non-covalently with TGF-beta-1 and regulates its activation via interaction with 'milieu molecules', such as LTBP1, LRRC32/GARP and LRRC33/NRROS, that control activation of TGF-beta-1. Interaction with integrins (ITGAV:ITGB6 or ITGAV:ITGB8) results in distortion of the Latency-associated peptide chain and subsequent release of the active TGF-beta-1. In terms of biological role, transforming growth factor beta-1: Multifunctional protein that regulates the growth and differentiation of various cell types and is involved in various processes, such as normal development, immune function, microglia function and responses to neurodegeneration. Activation into mature form follows different steps: following cleavage of the proprotein in the Golgi apparatus, Latency-associated peptide (LAP) and Transforming growth factor beta-1 (TGF-beta-1) chains remain non-covalently linked rendering TGF-beta-1 inactive during storage in extracellular matrix. At the same time, LAP chain interacts with 'milieu molecules', such as LTBP1, LRRC32/GARP and LRRC33/NRROS that control activation of TGF-beta-1 and maintain it in a latent state during storage in extracellular milieus. TGF-beta-1 is released from LAP by integrins (ITGAV:ITGB6 or ITGAV:ITGB8): integrin-binding to LAP stabilizes an alternative conformation of the LAP bowtie tail and results in distortion of the LAP chain and subsequent release of the active TGF-beta-1. Once activated following release of LAP, TGF-beta-1 acts by binding to TGF-beta receptors (TGFBR1 and TGFBR2), which transduce signal. While expressed by many cells types, TGF-beta-1 only has a very localized range of action within cell environment thanks to fine regulation of its activation by Latency-associated peptide chain (LAP) and 'milieu molecules'. Plays an important role in bone remodeling: acts as a potent stimulator of osteoblastic bone formation. Can promote either T-helper 17 cells (Th17) or regulatory T-cells (Treg) lineage differentiation in a concentration-dependent manner. Can induce epithelial-to-mesenchymal transition (EMT) and cell migration in various cell types. This chain is Transforming growth factor beta-1 proprotein (TGFB1), found in Gallus gallus (Chicken).